A 113-amino-acid polypeptide reads, in one-letter code: Hydrogenase maturation factor HybF (113 aa).

Ni(2+) contacts are provided by His-2 and Glu-3. 4 residues coordinate Zn(2+): Cys-73, Cys-76, Cys-89, and Cys-92.

Belongs to the HypA/HybF family. HybF subfamily.

In terms of biological role, involved in the maturation of [NiFe] hydrogenases. Required for nickel insertion into the metal center of the hydrogenase. In Escherichia coli O6:H1 (strain CFT073 / ATCC 700928 / UPEC), this protein is Hydrogenase maturation factor HybF.